Here is a 537-residue protein sequence, read N- to C-terminus: Putative cysteine ligase BshC (537 aa).

Residues 417–457 adopt a coiled-coil conformation; it reads ASEQFLNELDQLEAQQKETYERLAAEVQGNEDNKNLVEKNN.

This sequence belongs to the BshC family.

Involved in bacillithiol (BSH) biosynthesis. May catalyze the last step of the pathway, the addition of cysteine to glucosamine malate (GlcN-Mal) to generate BSH. The polypeptide is Putative cysteine ligase BshC (Staphylococcus carnosus (strain TM300)).